A 395-amino-acid polypeptide reads, in one-letter code: 1-deoxy-D-xylulose 5-phosphate reductoisomerase (395 aa).

Residues threonine 15, glycine 16, serine 17, isoleucine 18, glycine 41, asparagine 43, and asparagine 126 each contribute to the NADPH site. Lysine 127 contributes to the 1-deoxy-D-xylulose 5-phosphate binding site. An NADPH-binding site is contributed by glutamate 128. Aspartate 152 is a Mn(2+) binding site. 4 residues coordinate 1-deoxy-D-xylulose 5-phosphate: serine 153, glutamate 154, serine 178, and histidine 201. Position 154 (glutamate 154) interacts with Mn(2+). Residue glycine 207 coordinates NADPH. Positions 214, 219, 220, and 223 each coordinate 1-deoxy-D-xylulose 5-phosphate. Residue glutamate 223 participates in Mn(2+) binding.

The protein belongs to the DXR family. It depends on Mg(2+) as a cofactor. Requires Mn(2+) as cofactor.

The catalysed reaction is 2-C-methyl-D-erythritol 4-phosphate + NADP(+) = 1-deoxy-D-xylulose 5-phosphate + NADPH + H(+). The protein operates within isoprenoid biosynthesis; isopentenyl diphosphate biosynthesis via DXP pathway; isopentenyl diphosphate from 1-deoxy-D-xylulose 5-phosphate: step 1/6. Functionally, catalyzes the NADPH-dependent rearrangement and reduction of 1-deoxy-D-xylulose-5-phosphate (DXP) to 2-C-methyl-D-erythritol 4-phosphate (MEP). The chain is 1-deoxy-D-xylulose 5-phosphate reductoisomerase from Ruegeria sp. (strain TM1040) (Silicibacter sp.).